The primary structure comprises 369 residues: Phospho-N-acetylmuramoyl-pentapeptide-transferase (369 aa).

10 helical membrane passes run 2 to 22, 55 to 75, 86 to 106, 122 to 142, 158 to 178, 196 to 216, 239 to 259, 266 to 286, 291 to 311, and 348 to 368; these read IALLIGAGLALLFALVGTPLF, TVVVFAVLLSYALTHLIMWMM, ALLLLFLMVGMGLVGFLDDFI, LVLQGAVGIIFAILALNFPNA, IPWLNLAFGGTVLGAILFVLW, LDGLAAGASVMVFGAYTLMGI, PLDLALLAAILSAALVGFLWW, IFMGDTGSLAIGGAVAGFAIL, LLLAFIGGLFVLITLSVIIQV, and ILGGLFVAAGLGIFYAEWVVL.

The protein belongs to the glycosyltransferase 4 family. MraY subfamily. It depends on Mg(2+) as a cofactor.

The protein localises to the cell membrane. The catalysed reaction is UDP-N-acetyl-alpha-D-muramoyl-L-alanyl-gamma-D-glutamyl-meso-2,6-diaminopimeloyl-D-alanyl-D-alanine + di-trans,octa-cis-undecaprenyl phosphate = di-trans,octa-cis-undecaprenyl diphospho-N-acetyl-alpha-D-muramoyl-L-alanyl-D-glutamyl-meso-2,6-diaminopimeloyl-D-alanyl-D-alanine + UMP. Its pathway is cell wall biogenesis; peptidoglycan biosynthesis. Its function is as follows. Catalyzes the initial step of the lipid cycle reactions in the biosynthesis of the cell wall peptidoglycan: transfers peptidoglycan precursor phospho-MurNAc-pentapeptide from UDP-MurNAc-pentapeptide onto the lipid carrier undecaprenyl phosphate, yielding undecaprenyl-pyrophosphoryl-MurNAc-pentapeptide, known as lipid I. The chain is Phospho-N-acetylmuramoyl-pentapeptide-transferase from Arthrobacter sp. (strain FB24).